The primary structure comprises 341 residues: 3-keto-steroid reductase/17-beta-hydroxysteroid dehydrogenase 7 (341 aa).

Over 1 to 229 (MRKVVLITGA…VACPGTALTN (229 aa)) the chain is Extracellular. 8 to 15 (TGASSGIG) contacts NAD(+). An N-linked (GlcNAc...) asparagine glycan is attached at Asn-37. Residue Ser-171 participates in substrate binding. Residue Asn-178 is glycosylated (N-linked (GlcNAc...) asparagine). The active-site Proton acceptor is the Tyr-193. N-linked (GlcNAc...) asparagine glycosylation is present at Asn-229. A helical transmembrane segment spans residues 230-250 (LTYGILPPFIWTLLMPAILLL). Over 251–341 (RFFANAFTLT…NQARLSGSCL (91 aa)) the chain is Cytoplasmic.

The protein belongs to the short-chain dehydrogenases/reductases (SDR) family. ERG27 subfamily. Binds to the short form of prolactin receptor. Post-translationally, phosphorylated. As to expression, highly expressed in adrenal gland, liver, lung and thymus. Expressed in breast, ovaries, pituitary gland, pregnant uterus, prostate, kidney, lymph node, small intestine, spinal cord and trachea. Weakly expressed in all other tissues tested. Expressed in eye ciliary epithelial cells and neuroendocrine cells.

It is found in the endoplasmic reticulum membrane. It carries out the reaction 17beta-estradiol + NADP(+) = estrone + NADPH + H(+). The catalysed reaction is a 3beta-hydroxysteroid + NADP(+) = a 3-oxosteroid + NADPH + H(+). It catalyses the reaction 3-dehydro-4alpha-methylzymosterol + NADPH + H(+) = 4alpha-methylzymosterol + NADP(+). The enzyme catalyses zymosterone + NADPH + H(+) = zymosterol + NADP(+). It carries out the reaction 4alpha-methyl-5alpha-cholest-8-en-3-one + NADPH + H(+) = 4alpha-methyl-5alpha-cholest-8-en-3beta-ol + NADP(+). The catalysed reaction is 4alpha-methyl-5alpha-cholest-7-en-3beta-ol + NADP(+) = 4alpha-methyl-5alpha-cholest-7-en-3-one + NADPH + H(+). It catalyses the reaction 5alpha-cholest-8-en-3-one + NADPH + H(+) = 5alpha-cholest-8-en-3beta-ol + NADP(+). The enzyme catalyses 5alpha-androstane-3beta,17beta-diol + NADP(+) = 17beta-hydroxy-5alpha-androstan-3-one + NADPH + H(+). It carries out the reaction progesterone + NADPH + H(+) = 3beta-hydroxypregn-4-ene-20-one + NADP(+). Its pathway is steroid biosynthesis; estrogen biosynthesis. The protein operates within steroid biosynthesis; zymosterol biosynthesis; zymosterol from lanosterol: step 5/6. With respect to regulation, estradiol 17-beta-dehydrogenase and dihydrotestosterone oxidoreductase activities are selectively inhibited by 4-methyl-4-aza-5alpha-androstane derivatives, such as 17beta-[(N-Heptyl)methylamino]-4-aza-5r-androstan-3-one and 17beta-(N-Decylformamido)-4-aza-5r-androstan-3-one. In terms of biological role, bifunctional enzyme involved in steroid-hormone metabolism and cholesterol biosynthesis. Catalyzes the NADP(H)-dependent reduction of estrogens and androgens and regulates the biological potency of these steroids. Converts estrone (E1) to a more potent estrogen, 17beta-estradiol (E2). Converts dihydrotestosterone (DHT) to its inactive form 5a-androstane-3b,17b-diol. Converts moderately progesterone to 3beta-hydroxypregn-4-ene-20-one, leading to its inactivation. Additionally, participates in the post-squalene cholesterol biosynthesis, as a 3-ketosteroid reductase. Its function is as follows. Does not have enzymatic activities toward E1 and DHT. In Homo sapiens (Human), this protein is 3-keto-steroid reductase/17-beta-hydroxysteroid dehydrogenase 7 (HSD17B7).